The chain runs to 174 residues: Dual-action ribosomal maturation protein DarP (174 aa).

It belongs to the DarP family.

It is found in the cytoplasm. Member of a network of 50S ribosomal subunit biogenesis factors which assembles along the 30S-50S interface, preventing incorrect 23S rRNA structures from forming. Promotes peptidyl transferase center (PTC) maturation. This Pseudomonas paraeruginosa (strain DSM 24068 / PA7) (Pseudomonas aeruginosa (strain PA7)) protein is Dual-action ribosomal maturation protein DarP.